The following is a 228-amino-acid chain: Ribosomal RNA small subunit methyltransferase G (228 aa).

S-adenosyl-L-methionine contacts are provided by residues Gly-89, Leu-94, 140–141 (VE), and Arg-159.

The protein belongs to the methyltransferase superfamily. RNA methyltransferase RsmG family.

The protein resides in the cytoplasm. It catalyses the reaction guanosine(527) in 16S rRNA + S-adenosyl-L-methionine = N(7)-methylguanosine(527) in 16S rRNA + S-adenosyl-L-homocysteine. Its function is as follows. Specifically methylates the N7 position of guanine in position 527 of 16S rRNA. This is Ribosomal RNA small subunit methyltransferase G from Burkholderia ambifaria (strain MC40-6).